Consider the following 208-residue polypeptide: Holliday junction branch migration complex subunit RuvA (208 aa).

Residues 1-63 (MIAFVSGPVA…EDSLTLYGFA (63 aa)) form a domain I region. The tract at residues 64–142 (NDDERQVFEL…EPVGAHIGQQ (79 aa)) is domain II. Residues 143 to 147 (GIGTP) are flexible linker. The segment at 148-208 (VTSGWRDQLQ…AALQTLNRAR (61 aa)) is domain III.

This sequence belongs to the RuvA family. As to quaternary structure, homotetramer. Forms an RuvA(8)-RuvB(12)-Holliday junction (HJ) complex. HJ DNA is sandwiched between 2 RuvA tetramers; dsDNA enters through RuvA and exits via RuvB. An RuvB hexamer assembles on each DNA strand where it exits the tetramer. Each RuvB hexamer is contacted by two RuvA subunits (via domain III) on 2 adjacent RuvB subunits; this complex drives branch migration. In the full resolvosome a probable DNA-RuvA(4)-RuvB(12)-RuvC(2) complex forms which resolves the HJ.

The protein resides in the cytoplasm. Its function is as follows. The RuvA-RuvB-RuvC complex processes Holliday junction (HJ) DNA during genetic recombination and DNA repair, while the RuvA-RuvB complex plays an important role in the rescue of blocked DNA replication forks via replication fork reversal (RFR). RuvA specifically binds to HJ cruciform DNA, conferring on it an open structure. The RuvB hexamer acts as an ATP-dependent pump, pulling dsDNA into and through the RuvAB complex. HJ branch migration allows RuvC to scan DNA until it finds its consensus sequence, where it cleaves and resolves the cruciform DNA. This chain is Holliday junction branch migration complex subunit RuvA, found in Streptomyces griseus subsp. griseus (strain JCM 4626 / CBS 651.72 / NBRC 13350 / KCC S-0626 / ISP 5235).